The primary structure comprises 626 residues: tRNA uridine 5-carboxymethylaminomethyl modification enzyme MnmG (626 aa).

14 to 19 (GAGHAG) contacts FAD. 273–287 (GPRYCPSIEDKVVRF) lines the NAD(+) pocket.

This sequence belongs to the MnmG family. As to quaternary structure, homodimer. Heterotetramer of two MnmE and two MnmG subunits. It depends on FAD as a cofactor.

It localises to the cytoplasm. Its function is as follows. NAD-binding protein involved in the addition of a carboxymethylaminomethyl (cmnm) group at the wobble position (U34) of certain tRNAs, forming tRNA-cmnm(5)s(2)U34. This chain is tRNA uridine 5-carboxymethylaminomethyl modification enzyme MnmG, found in Caldicellulosiruptor saccharolyticus (strain ATCC 43494 / DSM 8903 / Tp8T 6331).